Consider the following 201-residue polypeptide: High mobility group protein homolog 068R (201 aa).

DNA-binding regions (HMG box) lie at residues 70 to 138 (PKRN…ELEK) and 143 to 201 (TPSK…KAAK).

It belongs to the IIV-6 401R family.

The protein localises to the host nucleus. In Invertebrate iridescent virus 3 (IIV-3), this protein is High mobility group protein homolog 068R.